Reading from the N-terminus, the 308-residue chain is tRNA pseudouridine synthase B (308 aa).

Asp-47 (nucleophile) is an active-site residue.

The protein belongs to the pseudouridine synthase TruB family. Type 1 subfamily.

The catalysed reaction is uridine(55) in tRNA = pseudouridine(55) in tRNA. Responsible for synthesis of pseudouridine from uracil-55 in the psi GC loop of transfer RNAs. This is tRNA pseudouridine synthase B from Xanthomonas euvesicatoria pv. vesicatoria (strain 85-10) (Xanthomonas campestris pv. vesicatoria).